Reading from the N-terminus, the 296-residue chain is Lipoyl synthase (296 aa).

Residues C37, C42, C48, C63, C67, C70, and S276 each contribute to the [4Fe-4S] cluster site. The Radical SAM core domain maps to 49-265 (WSKKHTTVMI…ERVAKTKGFL (217 aa)).

This sequence belongs to the radical SAM superfamily. Lipoyl synthase family. Requires [4Fe-4S] cluster as cofactor.

The protein localises to the cytoplasm. The catalysed reaction is [[Fe-S] cluster scaffold protein carrying a second [4Fe-4S](2+) cluster] + N(6)-octanoyl-L-lysyl-[protein] + 2 oxidized [2Fe-2S]-[ferredoxin] + 2 S-adenosyl-L-methionine + 4 H(+) = [[Fe-S] cluster scaffold protein] + N(6)-[(R)-dihydrolipoyl]-L-lysyl-[protein] + 4 Fe(3+) + 2 hydrogen sulfide + 2 5'-deoxyadenosine + 2 L-methionine + 2 reduced [2Fe-2S]-[ferredoxin]. Its pathway is protein modification; protein lipoylation via endogenous pathway; protein N(6)-(lipoyl)lysine from octanoyl-[acyl-carrier-protein]: step 2/2. Functionally, catalyzes the radical-mediated insertion of two sulfur atoms into the C-6 and C-8 positions of the octanoyl moiety bound to the lipoyl domains of lipoate-dependent enzymes, thereby converting the octanoylated domains into lipoylated derivatives. This Rickettsia peacockii (strain Rustic) protein is Lipoyl synthase.